The following is a 338-amino-acid chain: 1-aminocyclopropane-1-carboxylate deaminase (338 aa).

The residue at position 51 (Lys-51) is an N6-(pyridoxal phosphate)lysine. Catalysis depends on Ser-78, which acts as the Nucleophile.

Belongs to the ACC deaminase/D-cysteine desulfhydrase family. As to quaternary structure, homotrimer. Pyridoxal 5'-phosphate is required as a cofactor.

The enzyme catalyses 1-aminocyclopropane-1-carboxylate + H2O = 2-oxobutanoate + NH4(+). In terms of biological role, catalyzes a cyclopropane ring-opening reaction, the irreversible conversion of 1-aminocyclopropane-1-carboxylate (ACC) to ammonia and alpha-ketobutyrate. Allows growth on ACC as a nitrogen source. This is 1-aminocyclopropane-1-carboxylate deaminase from Burkholderia pseudomallei (strain 1106a).